Here is a 333-residue protein sequence, read N- to C-terminus: Alpha-N-acetylgalactosaminide alpha-2,6-sialyltransferase 6 (333 aa).

Polar residues predominate over residues 1–12 (MACSRPPSQCEP). The interval 1–26 (MACSRPPSQCEPTSLPPGPPAGRRHL) is disordered. At 1–43 (MACSRPPSQCEPTSLPPGPPAGRRHLPLSRRRREMSSNKEQRS) the chain is on the cytoplasmic side. A helical; Signal-anchor for type II membrane protein transmembrane segment spans residues 44–64 (AVFVILFALITILILYSSNSA). Residues 65 to 333 (NEVFHYGSLR…GITFSHPSWT (269 aa)) lie on the Lumenal side of the membrane. The N-linked (GlcNAc...) asparagine glycan is linked to asparagine 98. Cysteine 108 and cysteine 256 form a disulfide bridge.

The protein belongs to the glycosyltransferase 29 family. In terms of tissue distribution, expressed in kidney, in proximal tubule epithelial cells. Expressed in colon cell lines.

Its subcellular location is the golgi apparatus membrane. The catalysed reaction is a ganglioside GM1b (d18:1(4E)) + CMP-N-acetyl-beta-neuraminate = a ganglioside GD1alpha (d18:1(4E)) + CMP + H(+). The enzyme catalyses N-acetyl-alpha-neuraminosyl-(2-&gt;3)-beta-D-galactosyl-(1-&gt;3)-N-acetyl-beta-D-glucosaminyl-(1-&gt;3)-beta-D-galactosyl-(1-&gt;4)-beta-D-glucosyl-(1&lt;-&gt;1')-N-acyl-sphing-4-enine + CMP-N-acetyl-beta-neuraminate = N-acetyl-alpha-neuraminosyl-(2-&gt;3)-beta-D-galactosyl-(1-&gt;3)-[N-acetyl-alpha-neuraminosyl-(2-&gt;6)]-N-acetyl-beta-D-glucosaminyl-(1-&gt;3)-beta-D-galactosyl-(1-&gt;4)-beta-D-glucosyl-(1&lt;-&gt;1')-N-acyl-sphing-4-enine + CMP + H(+). It carries out the reaction a globoside MSGG + CMP-N-acetyl-beta-neuraminate = a globoside DSGG + CMP + H(+). It catalyses the reaction a ganglioside GD1a (d18:1(4E)) + CMP-N-acetyl-beta-neuraminate = a ganglioside GT1aalpha (d18:1(4E)) + CMP + H(+). The catalysed reaction is a ganglioside GT1b (d18:1(4E)) + CMP-N-acetyl-beta-neuraminate = a ganglioside GQ1balpha (d18:1(4E)) + CMP + H(+). The enzyme catalyses 3-O-[alpha-Neu5Ac-(2-&gt;3)-beta-D-Gal-(1-&gt;3)-alpha-D-GalNAc]-L-Ser-[protein] + CMP-N-acetyl-beta-neuraminate = a 3-O-{alpha-Neu5Ac-(2-&gt;3)-beta-D-Gal-(1-&gt;3)-[alpha-Neu5Ac-(2-&gt;6)]-alpha-D-GalNAc}-L-seryl-[protein] + CMP + H(+). It carries out the reaction 3-O-[alpha-Neu5Ac-(2-&gt;3)-beta-D-Gal-(1-&gt;3)-alpha-D-GalNAc]-L-Thr-[protein] + CMP-N-acetyl-beta-neuraminate = a 3-O-{alpha-Neu5Ac-(2-&gt;3)-beta-D-Gal-(1-&gt;3)-[alpha-Neu5Ac-(2-&gt;6)]-alpha-D-GalNAc}-L-threonyl-[protein] + CMP + H(+). Its function is as follows. Transfers the sialyl group (N-acetyl-alpha-neuraminyl or NeuAc) from CMP-NeuAc onto glycoproteins and glycolipids, forming an alpha-2,6-linkage. Produces branched type disialyl structures by transfer of a sialyl group onto the GalNAc or GlcNAc residue inside backbone core chains having a terminal sialic acid with an alpha-2,3-linkage on Gal. ST6GalNAcVI prefers glycolipids to glycoproteins, predominantly catalyzing the biosynthesis of ganglioside GD1alpha from GM1b. Besides GMb1, MSGG and other glycolipids, it shows activity towards sialyl Lc4Cer generating disialyl Lc4Cer, which can lead to the synthesis of disialyl Lewis a (Le(a)), suggested to be a cancer-associated antigen. Also has activity toward GD1a and GT1b, and can generate DSGG (disialylgalactosylgloboside) from MSGG (monosialylgalactosylgloboside). This chain is Alpha-N-acetylgalactosaminide alpha-2,6-sialyltransferase 6 (ST6GALNAC6), found in Homo sapiens (Human).